The chain runs to 658 residues: Squalene--hopene cyclase (658 aa).

The stretch at 69 to 110 is one PFTB 1 repeat; it reads EAKIGRYLRRIQGEHGGWSLFYGGDLDLSATVKAYFALKMIG. Residue Asp-392 is the Proton donor of the active site. PFTB repeat units follow at residues 418-459, 486-526, and 534-584; these read KARA…GALL, MKAA…NVAA, and IQKA…GLMA.

Belongs to the terpene cyclase/mutase family.

The protein resides in the cell membrane. The enzyme catalyses squalene = hop-22(29)-ene. It carries out the reaction squalene + H2O = hopan-22-ol. It functions in the pathway secondary metabolite biosynthesis; hopanoid biosynthesis. Catalyzes the cyclization of squalene into hopene. The protein is Squalene--hopene cyclase (shc) of Zymomonas mobilis subsp. mobilis (strain ATCC 31821 / ZM4 / CP4).